The primary structure comprises 311 residues: tRNA dimethylallyltransferase (311 aa).

An ATP-binding site is contributed by 9–16; sequence GPTAVGKT. A substrate-binding site is contributed by 11–16; it reads TAVGKT. The tract at residues 34–37 is interaction with substrate tRNA; sequence DSMQ.

It belongs to the IPP transferase family. Monomer. Mg(2+) serves as cofactor.

It catalyses the reaction adenosine(37) in tRNA + dimethylallyl diphosphate = N(6)-dimethylallyladenosine(37) in tRNA + diphosphate. In terms of biological role, catalyzes the transfer of a dimethylallyl group onto the adenine at position 37 in tRNAs that read codons beginning with uridine, leading to the formation of N6-(dimethylallyl)adenosine (i(6)A). In Clostridium botulinum (strain Hall / ATCC 3502 / NCTC 13319 / Type A), this protein is tRNA dimethylallyltransferase.